A 199-amino-acid chain; its full sequence is GTP cyclohydrolase-2 (199 aa).

Residue 49–53 (RIHSE) participates in GTP binding. Residues Cys-54, Cys-65, and Cys-67 each coordinate Zn(2+). GTP is bound by residues Gln-70, 92–94 (EGR), and Thr-114. Asp-126 (proton acceptor) is an active-site residue. Arg-128 functions as the Nucleophile in the catalytic mechanism. Thr-149 and Lys-154 together coordinate GTP.

It belongs to the GTP cyclohydrolase II family. In terms of assembly, homodimer. It depends on Zn(2+) as a cofactor.

It carries out the reaction GTP + 4 H2O = 2,5-diamino-6-hydroxy-4-(5-phosphoribosylamino)-pyrimidine + formate + 2 phosphate + 3 H(+). It functions in the pathway cofactor biosynthesis; riboflavin biosynthesis; 5-amino-6-(D-ribitylamino)uracil from GTP: step 1/4. In terms of biological role, catalyzes the conversion of GTP to 2,5-diamino-6-ribosylamino-4(3H)-pyrimidinone 5'-phosphate (DARP), formate and pyrophosphate. In Proteus mirabilis (strain HI4320), this protein is GTP cyclohydrolase-2.